Here is a 141-residue protein sequence, read N- to C-terminus: Large ribosomal subunit protein uL11 (141 aa).

Belongs to the universal ribosomal protein uL11 family. In terms of assembly, part of the ribosomal stalk of the 50S ribosomal subunit. Interacts with L10 and the large rRNA to form the base of the stalk. L10 forms an elongated spine to which L12 dimers bind in a sequential fashion forming a multimeric L10(L12)X complex. Post-translationally, one or more lysine residues are methylated.

In terms of biological role, forms part of the ribosomal stalk which helps the ribosome interact with GTP-bound translation factors. The chain is Large ribosomal subunit protein uL11 from Helicobacter pylori (strain P12).